The primary structure comprises 352 residues: N-acetyl-gamma-glutamyl-phosphate reductase (352 aa).

C155 is a catalytic residue.

This sequence belongs to the NAGSA dehydrogenase family. Type 1 subfamily.

The protein localises to the cytoplasm. The catalysed reaction is N-acetyl-L-glutamate 5-semialdehyde + phosphate + NADP(+) = N-acetyl-L-glutamyl 5-phosphate + NADPH + H(+). It participates in amino-acid biosynthesis; L-arginine biosynthesis; N(2)-acetyl-L-ornithine from L-glutamate: step 3/4. In terms of biological role, catalyzes the NADPH-dependent reduction of N-acetyl-5-glutamyl phosphate to yield N-acetyl-L-glutamate 5-semialdehyde. This Gloeothece citriformis (strain PCC 7424) (Cyanothece sp. (strain PCC 7424)) protein is N-acetyl-gamma-glutamyl-phosphate reductase.